The following is a 430-amino-acid chain: Asparagine--tRNA ligase (430 aa).

The protein belongs to the class-II aminoacyl-tRNA synthetase family. As to quaternary structure, homodimer.

The protein localises to the cytoplasm. The enzyme catalyses tRNA(Asn) + L-asparagine + ATP = L-asparaginyl-tRNA(Asn) + AMP + diphosphate + H(+). This Bacillus licheniformis (strain ATCC 14580 / DSM 13 / JCM 2505 / CCUG 7422 / NBRC 12200 / NCIMB 9375 / NCTC 10341 / NRRL NRS-1264 / Gibson 46) protein is Asparagine--tRNA ligase.